A 402-amino-acid polypeptide reads, in one-letter code: 5-methylphenazine-1-carboxylate 1-monooxygenase (402 aa).

FAD contacts are provided by residues 14–15 (IG), 35–36 (ES), 43–45 (LGV), arginine 106, valine 132, arginine 191, and aspartate 310. A compositionally biased stretch (basic and acidic residues) spans 368–385 (REKEEWAAASRPKTEKSA). Residues 368–402 (REKEEWAAASRPKTEKSAALEAITGSYRNQVERPR) form a disordered region.

In terms of assembly, monomer in solution. Probably interacts transiently with PhzM. Requires FAD as cofactor.

The catalysed reaction is 5-methyl-phenazine-1-carboxylate + NADH + O2 + 2 H(+) = pyocyanin + CO2 + NAD(+) + H2O. It functions in the pathway secondary metabolite biosynthesis; pyocyanine biosynthesis. Involved in the biosynthesis of pyocyanine, a blue-pigmented phenazine derivative, which plays a role in virulence. Catalyzes the oxidative decarboxylation of 5-methylphenazine-1-carboxylate (5-methyl-PCA) to pyocyanine. Can also act on phenazine-1-carboxylate (PCA), converting it into 1-hydroxyphenazine (1-HP). However, PCA is a poor substrate. The polypeptide is 5-methylphenazine-1-carboxylate 1-monooxygenase (Pseudomonas aeruginosa (strain ATCC 15692 / DSM 22644 / CIP 104116 / JCM 14847 / LMG 12228 / 1C / PRS 101 / PAO1)).